Consider the following 463-residue polypeptide: Elongation factor 1-alpha (463 aa).

Residues 8 to 245 (KTHLNIVIIG…DALVPPVRPA (238 aa)) enclose the tr-type G domain. Residues 17–24 (GHVDSGKS) are G1. A GTP-binding site is contributed by 17-24 (GHVDSGKS). A G2 region spans residues 73-77 (GITID). A G3 region spans residues 94–97 (DAPG). Residues 94–98 (DAPGH) and 156–159 (NKMD) each bind GTP. Residues 156–159 (NKMD) form a G4 region. The segment at 197-199 (SGW) is G5.

It belongs to the TRAFAC class translation factor GTPase superfamily. Classic translation factor GTPase family. EF-Tu/EF-1A subfamily. The 42S RNP particle comprises four subunits each of which contains one molecule of 5S RNA, three molecules of tRNA, two molecules of EF1-alpha and one molecule of the 5S RNA binding protein 43.

It localises to the cytoplasm. This protein is one of two protein components of a 42S RNP particle that is very abundant in previtellogenic oocytes. A major function served by 42sp50 appears to be the storage of tRNAs for later use in oogenesis and early embryogenesis. Purified 42S particles can directly transfer aminoacyl tRNA to ribosomes. This chain is Elongation factor 1-alpha, found in Xenopus laevis (African clawed frog).